The chain runs to 144 residues: Large ribosomal subunit protein uL11 (144 aa).

The protein belongs to the universal ribosomal protein uL11 family. In terms of assembly, part of the ribosomal stalk of the 50S ribosomal subunit. Interacts with L10 and the large rRNA to form the base of the stalk. L10 forms an elongated spine to which L12 dimers bind in a sequential fashion forming a multimeric L10(L12)X complex. One or more lysine residues are methylated.

Its function is as follows. Forms part of the ribosomal stalk which helps the ribosome interact with GTP-bound translation factors. In Deinococcus geothermalis (strain DSM 11300 / CIP 105573 / AG-3a), this protein is Large ribosomal subunit protein uL11.